A 504-amino-acid polypeptide reads, in one-letter code: Maturase K (504 aa).

The protein belongs to the intron maturase 2 family. MatK subfamily.

It localises to the plastid. The protein resides in the chloroplast. Usually encoded in the trnK tRNA gene intron. Probably assists in splicing its own and other chloroplast group II introns. This is Maturase K from Hamamelis japonica (Japanese witch hazel).